Here is a 246-residue protein sequence, read N- to C-terminus: Orotidine 5'-phosphate decarboxylase (246 aa).

Substrate is bound by residues D22, K44, 71 to 80 (DLKYHDIPHT), T130, R191, Q201, G221, and R222. K73 serves as the catalytic Proton donor.

The protein belongs to the OMP decarboxylase family. Type 1 subfamily. In terms of assembly, homodimer.

The catalysed reaction is orotidine 5'-phosphate + H(+) = UMP + CO2. It participates in pyrimidine metabolism; UMP biosynthesis via de novo pathway; UMP from orotate: step 2/2. Catalyzes the decarboxylation of orotidine 5'-monophosphate (OMP) to uridine 5'-monophosphate (UMP). The chain is Orotidine 5'-phosphate decarboxylase from Neisseria gonorrhoeae (strain ATCC 700825 / FA 1090).